The primary structure comprises 475 residues: UDP-N-acetylmuramate--L-alanine ligase (475 aa).

114 to 120 (GTHGKTT) lines the ATP pocket.

This sequence belongs to the MurCDEF family.

Its subcellular location is the cytoplasm. It carries out the reaction UDP-N-acetyl-alpha-D-muramate + L-alanine + ATP = UDP-N-acetyl-alpha-D-muramoyl-L-alanine + ADP + phosphate + H(+). Its pathway is cell wall biogenesis; peptidoglycan biosynthesis. Cell wall formation. The protein is UDP-N-acetylmuramate--L-alanine ligase of Bartonella quintana (strain Toulouse) (Rochalimaea quintana).